A 408-amino-acid chain; its full sequence is Biphenyl dioxygenase system ferredoxin--NAD(+) reductase component (408 aa).

4–35 is an FAD binding site; that stretch reads TIAIIGAGLAGSTAARALRAQGYEGRIHLLGD. 145 to 173 contributes to the NAD(+) binding site; it reads SLVIVGGGLIGCEVATTARKLSVHVTILE.

It belongs to the bacterial ring-hydroxylating dioxygenase ferredoxin reductase family. This dioxygenase system consists of four proteins: the two subunits of the hydroxylase component (BphA and BphE), a ferredoxin (BphF) and a ferredoxin reductase (BphG). It depends on FAD as a cofactor.

The catalysed reaction is 2 reduced [2Fe-2S]-[ferredoxin] + NAD(+) + H(+) = 2 oxidized [2Fe-2S]-[ferredoxin] + NADH. It functions in the pathway xenobiotic degradation; biphenyl degradation. Its function is as follows. Part of the electron transfer component of biphenyl dioxygenase, transfers electrons from ferredoxin (BphF) to NADH. The polypeptide is Biphenyl dioxygenase system ferredoxin--NAD(+) reductase component (bphG) (Paraburkholderia xenovorans (strain LB400)).